The chain runs to 329 residues: Glycosyltransferase family protein 64 C3 (329 aa).

A signal peptide spans 1-27 (MGVKSVRFSIWFLFVVTDLVFCRTLSG). The N-linked (GlcNAc...) asparagine glycan is linked to Asn99. Residues 118 to 123 (SSLNAR), 139 to 141 (DDD), Arg169, 226 to 230 (RNCED), and 271 to 284 (VGLS…RKRR) contribute to the substrate site. Asp141 contacts Mn(2+). A disulfide bridge links Cys228 with Cys287. Asp230 is a catalytic residue. Residues 268–284 (VRDVGLSSRRVEHRKRR) are substrate binding.

It belongs to the glycosyltransferase 64 family. The cofactor is Mn(2+).

It participates in protein modification; protein glycosylation. Its function is as follows. Probable glycosyltransferase. In Arabidopsis thaliana (Mouse-ear cress), this protein is Glycosyltransferase family protein 64 C3.